Reading from the N-terminus, the 301-residue chain is Sulfate adenylyltransferase subunit 2 (301 aa).

Residues 278–301 (ERQGRLIDGDEPASMERKKREGYF) are disordered.

Belongs to the PAPS reductase family. CysD subfamily. In terms of assembly, sulfate-activating enzymes, NodP and NodQ, may be physically associated.

The catalysed reaction is sulfate + ATP + H(+) = adenosine 5'-phosphosulfate + diphosphate. Proposed to provide activated sulfate for transfer to nod factor. This chain is Sulfate adenylyltransferase subunit 2 (nodP), found in Azospirillum brasilense.